The chain runs to 183 residues: Translation initiation factor IF-3 (183 aa).

Belongs to the IF-3 family. As to quaternary structure, monomer.

The protein resides in the cytoplasm. In terms of biological role, IF-3 binds to the 30S ribosomal subunit and shifts the equilibrium between 70S ribosomes and their 50S and 30S subunits in favor of the free subunits, thus enhancing the availability of 30S subunits on which protein synthesis initiation begins. The protein is Translation initiation factor IF-3 of Yersinia pseudotuberculosis serotype O:1b (strain IP 31758).